Reading from the N-terminus, the 85-residue chain is Putative transmembrane protein ORF28 (85 aa).

2 consecutive transmembrane segments (helical) span residues 32 to 52 (IMLLWWIGILGMLNYNLVQIV) and 59 to 79 (LLSVSTFIVGCGLCIGFMLGI).

It localises to the host membrane. The chain is Putative transmembrane protein ORF28 from Haloarcula hispanica (His1V).